The primary structure comprises 267 residues: NLP effector protein 6 (267 aa).

Positions 1–35 (MRTTSPYSHCSHVEMNAGAFVTMLLVALSVCVAAA) are cleaved as a signal peptide. Asn-114 carries an N-linked (GlcNAc...) asparagine glycan. A Conserved undecapeptide motif motif is present at residues 117 to 127 (AIMYAWYFPKR). The short motif at 134–140 (IQRHDWK) is the Conserved heptapeptide motif element. Asn-192 is a glycosylation site (N-linked (GlcNAc...) asparagine).

Belongs to the Necrosis inducing protein (NPP1) family.

The protein resides in the secreted. In terms of biological role, probable secreted effector that may act as a pathogen-associated molecular pattern (PAMP) recognized by the plant immune system. The polypeptide is NLP effector protein 6 (Plasmopara viticola (Downy mildew of grapevine)).